The primary structure comprises 316 residues: MSSLGGGSQDAGGSSSSSNTSSSSGSGQKAGGTDKSATVAATAPASVADDAPPPERRNKSGIISEPLNKSLRRSRPLSHYSSFGSSGGAGSMMGGESADKAAAAAASLLANGHDLAAAMAVDKSNPTSKHKSGAVASLLSKAERATELAAEGQLTLQQFAQSTEMLKRVVQEHLPLMSEAGAGLPDMEAVAGAEALNGQSDFPYLGAFPINPGLFIMTPAGVFLAESALHMAGLAEYPMQGELASAISSGKKKRKRCGMCAPCRRRINCEQCSSCRNRKTGHQICKFRKCEELKKKPSAALEKVMLPSGAAFRWFQ.

Over residues Met-1–Asp-10 the composition is skewed to gly residues. The interval Met-1–Gly-95 is disordered. Low complexity-rich tracts occupy residues Ala-11 to Gly-27 and Ser-36 to Asp-50. The segment at Gly-250–Glu-291 adopts a CXXC-type zinc-finger fold. Positions Lys-251–Arg-256 match the Nuclear localization signal motif. 8 residues coordinate Zn(2+): Cys-257, Cys-260, Cys-263, Cys-269, Cys-272, Cys-275, Cys-285, and Cys-290.

Interacts with DVL1. Interacts with RBPJ. Expressed in neural stem cells (at protein level). Expressed in the dorsal telencephalon.

It is found in the nucleus. The protein localises to the cytoplasm. Its function is as follows. May indirectly participate in activation of the NF-kappa-B and MAPK pathways. Required for DNA damage-induced ATM phosphorylation, p53 activation and cell cycle arrest. Involved in myelopoiesis. Acts as a mediator of BMP4-mediated modulation of canonical Wnt signaling activity in neural stem cells. Binds to the oxygen responsive element of COX4I2 and represses its transcription under hypoxia conditions (4% oxygen), as well as normoxia conditions (20% oxygen). May repress COX4I2 transactivation induced by CHCHD2 and RBPJ. Binds preferentially to DNA containing cytidine-phosphate-guanosine (CpG) dinucleotides over CpH (H=A, T, and C), hemimethylated-CpG and hemimethylated-hydroxymethyl-CpG. The sequence is that of CXXC-type zinc finger protein 5 (Cxxc5) from Rattus norvegicus (Rat).